The primary structure comprises 196 residues: Thymidine kinase (196 aa).

Position 17-24 (17-24) interacts with ATP; that stretch reads GPMFAGKT. Glu92 functions as the Proton acceptor in the catalytic mechanism. Residue Phe121 coordinates substrate. The Zn(2+) site is built by Cys146 and Cys149. 166–170 serves as a coordination point for substrate; it reads LILAG. Zn(2+) is bound by residues Cys179 and Cys182.

Belongs to the thymidine kinase family.

The catalysed reaction is thymidine + ATP = dTMP + ADP + H(+). Functionally, phosphorylates thymidine. ASFV replicates in the cytoplasm of infected cells and contains genes encoding a number of enzymes needed for DNA synthesis, including thymidine kinase. Important for growth in swine macrophages in vitro and is a virus virulence factor in swine. The protein is Thymidine kinase of Ornithodoros (relapsing fever ticks).